A 413-amino-acid polypeptide reads, in one-letter code: Multidrug resistance protein MdtA (413 aa).

Positions 1–20 (MKGSNTFRWAIAIGVVVAAA) are cleaved as a signal peptide. Disordered stretches follow at residues 31-57 (SPTA…RDGP) and 391-413 (EPQT…GARA). The span at 397-413 (ADEKSPSRHEGQKGARA) shows a compositional bias: basic and acidic residues.

It belongs to the membrane fusion protein (MFP) (TC 8.A.1) family. Part of a tripartite efflux system composed of MdtA, MdtB and MdtC.

It is found in the cell inner membrane. The protein is Multidrug resistance protein MdtA of Salmonella paratyphi C (strain RKS4594).